An 830-amino-acid chain; its full sequence is uncharacterized protein (830 aa).

Basic and acidic residues predominate over residues M1–V12. The interval M1–T61 is disordered. Residues A15–V25 are compositionally biased toward polar residues. Positions T249–N433 constitute a Helicase ATP-binding domain. D262–T269 lines the ATP pocket. The short motif at D384–H387 is the DEAH box element. In terms of domain architecture, Helicase C-terminal spans E662–T816. A Phosphoserine modification is found at S712.

This sequence belongs to the SNF2/RAD54 helicase family.

The protein localises to the nucleus. This is an uncharacterized protein from Schizosaccharomyces pombe (strain 972 / ATCC 24843) (Fission yeast).